The following is a 338-amino-acid chain: Eukaryotic translation initiation factor 3 subunit H (338 aa).

The MPN domain occupies 22–154; the sequence is VQCDGLAVMK…LKAYRLTPQA (133 aa).

It belongs to the eIF-3 subunit H family. Component of the eukaryotic translation initiation factor 3 (eIF-3) complex. The eIF-3 complex interacts with pix. Interacts with mxt.

It localises to the cytoplasm. Functionally, component of the eukaryotic translation initiation factor 3 (eIF-3) complex, which is involved in protein synthesis of a specialized repertoire of mRNAs and, together with other initiation factors, stimulates binding of mRNA and methionyl-tRNAi to the 40S ribosome. The eIF-3 complex specifically targets and initiates translation of a subset of mRNAs involved in cell proliferation. In Drosophila sechellia (Fruit fly), this protein is Eukaryotic translation initiation factor 3 subunit H.